The following is a 217-amino-acid chain: Pyrophosphatase PpaX (217 aa).

Catalysis depends on D11, which acts as the Nucleophile.

The protein belongs to the HAD-like hydrolase superfamily. PpaX family. Requires Mg(2+) as cofactor.

It catalyses the reaction diphosphate + H2O = 2 phosphate + H(+). Its function is as follows. Hydrolyzes pyrophosphate formed during P-Ser-HPr dephosphorylation by HPrK/P. Might play a role in controlling the intracellular pyrophosphate pool. The polypeptide is Pyrophosphatase PpaX (Listeria welshimeri serovar 6b (strain ATCC 35897 / DSM 20650 / CCUG 15529 / CIP 8149 / NCTC 11857 / SLCC 5334 / V8)).